The primary structure comprises 246 residues: tRNA (guanine-N(7)-)-methyltransferase (246 aa).

Residues 1–26 (MIENPSPSAANLPEHPSTDASHPRNI) are disordered. S-adenosyl-L-methionine is bound by residues Glu-75, Glu-100, Asp-127, and Asp-150. The active site involves Asp-150. A substrate-binding site is contributed by Lys-154. The interaction with RNA stretch occupies residues 156–161 (KHNKRR). Substrate-binding positions include Asp-186 and 225–228 (TKFE).

It belongs to the class I-like SAM-binding methyltransferase superfamily. TrmB family.

It carries out the reaction guanosine(46) in tRNA + S-adenosyl-L-methionine = N(7)-methylguanosine(46) in tRNA + S-adenosyl-L-homocysteine. It participates in tRNA modification; N(7)-methylguanine-tRNA biosynthesis. Functionally, catalyzes the formation of N(7)-methylguanine at position 46 (m7G46) in tRNA. The protein is tRNA (guanine-N(7)-)-methyltransferase of Polaromonas sp. (strain JS666 / ATCC BAA-500).